The sequence spans 148 residues: Large ribosomal subunit protein bL9 (148 aa).

It belongs to the bacterial ribosomal protein bL9 family.

Its function is as follows. Binds to the 23S rRNA. This chain is Large ribosomal subunit protein bL9, found in Bifidobacterium animalis subsp. lactis (strain AD011).